Here is a 264-residue protein sequence, read N- to C-terminus: Thymidylate synthase (264 aa).

Arginine 21 provides a ligand contact to dUMP. Histidine 51 provides a ligand contact to (6R)-5,10-methylene-5,6,7,8-tetrahydrofolate. 126–127 (RR) serves as a coordination point for dUMP. Cysteine 146 functions as the Nucleophile in the catalytic mechanism. Residues 166–169 (RSAD), asparagine 177, and 207–209 (HLY) each bind dUMP. Residue aspartate 169 participates in (6R)-5,10-methylene-5,6,7,8-tetrahydrofolate binding. Alanine 263 is a (6R)-5,10-methylene-5,6,7,8-tetrahydrofolate binding site.

Belongs to the thymidylate synthase family. Bacterial-type ThyA subfamily. Homodimer.

It localises to the cytoplasm. It carries out the reaction dUMP + (6R)-5,10-methylene-5,6,7,8-tetrahydrofolate = 7,8-dihydrofolate + dTMP. It participates in pyrimidine metabolism; dTTP biosynthesis. In terms of biological role, catalyzes the reductive methylation of 2'-deoxyuridine-5'-monophosphate (dUMP) to 2'-deoxythymidine-5'-monophosphate (dTMP) while utilizing 5,10-methylenetetrahydrofolate (mTHF) as the methyl donor and reductant in the reaction, yielding dihydrofolate (DHF) as a by-product. This enzymatic reaction provides an intracellular de novo source of dTMP, an essential precursor for DNA biosynthesis. The sequence is that of Thymidylate synthase from Rhizobium etli (strain ATCC 51251 / DSM 11541 / JCM 21823 / NBRC 15573 / CFN 42).